The sequence spans 1230 residues: Basic-leucine zipper transcription factor A (1230 aa).

Disordered stretches follow at residues 65–108, 180–233, 270–310, and 422–578; these read LYLS…NIIN, LNGN…QQHQ, QQLK…PSTQ, and HQQN…RKKD. Composition is skewed to low complexity over residues 69-108, 192-233, 270-287, 295-310, and 422-447; these read NSSN…NIIN, NNFS…QQHQ, QQLK…SPQP, PSLQ…PSTQ, and HQQN…QQQH. Polar residues-rich tracts occupy residues 448 to 458 and 466 to 475; these read KSTPPTQNTPP and TPTLTTNGKG. The span at 476–503 shows a compositional bias: low complexity; the sequence is SKSTPPTTTTTTTTTTSSSSSSSSSSSS. A compositionally biased stretch (basic residues) spans 523–537; the sequence is PHHHHHHHNNHHHHH. Residues 541–554 are compositionally biased toward acidic residues; that stretch reads FSDENDEEFIDENE. One can recognise a bZIP domain in the interval 555-618; it reads DKSKNKSRSS…LGDVMRPDFD (64 aa). The basic motif stretch occupies residues 556 to 586; the sequence is KSKNKSRSSQNIASRNYRQRKKDHISEVEFK. The segment covering 562-571 has biased composition (polar residues); it reads RSSQNIASRN. Positions 590–604 are leucine-zipper; the sequence is LSLENERLKQENHLL. A coiled-coil region spans residues 728 to 753; it reads LKIDMELRTERDQLDREIKELFLKKI. Disordered regions lie at residues 772–869 and 1025–1230; these read TFNS…EHNK and NYTN…TPNI. Composition is skewed to low complexity over residues 774-803 and 810-831; these read NSES…IITP and NNQN…SNNN. The segment covering 832-845 has biased composition (basic residues); that stretch reads SHHHHHHHHSHLHG. Over residues 1025 to 1042 the composition is skewed to polar residues; the sequence is NYTNSPLITSSPSQLTPN. Composition is skewed to low complexity over residues 1052–1146 and 1153–1193; these read NNNN…NNGN and QALH…SPSS.

Belongs to the bZIP family. Binds DNA as a dimer. Heterodimerizes with dimB; in vitro. Also able to form homodimer; in vitro.

The protein localises to the nucleus. Transcriptional regulator involved in DIF-1 signaling. DIF-1 (Differentiation Inducing Factor-1) is a signal molecule involved in the differentiation of pstO (prestalk-O) cells. Functions both as an activator of prestalk gene expression and a repressor of prespore gene expression. The polypeptide is Basic-leucine zipper transcription factor A (dimA) (Dictyostelium discoideum (Social amoeba)).